Consider the following 367-residue polypeptide: S-adenosylmethionine decarboxylase proenzyme 3 (367 aa).

Active-site residues include Glu9 and Glu12. Ser69 functions as the Schiff-base intermediate with substrate; via pyruvic acid in the catalytic mechanism. Position 69 is a pyruvic acid (Ser); by autocatalysis (Ser69). Cys83 acts as the Proton donor; for catalytic activity in catalysis. Residues Ser234 and His247 each act as proton acceptor; for processing activity in the active site.

It belongs to the eukaryotic AdoMetDC family. The cofactor is pyruvate. In terms of processing, is synthesized initially as an inactive proenzyme. Formation of the active enzyme involves a self-maturation process in which the active site pyruvoyl group is generated from an internal serine residue via an autocatalytic post-translational modification. Two non-identical subunits are generated from the proenzyme in this reaction, and the pyruvate is formed at the N-terminus of the alpha chain, which is derived from the carboxyl end of the proenzyme. The post-translation cleavage follows an unusual pathway, termed non-hydrolytic serinolysis, in which the side chain hydroxyl group of the serine supplies its oxygen atom to form the C-terminus of the beta chain, while the remainder of the serine residue undergoes an oxidative deamination to produce ammonia and the pyruvoyl group blocking the N-terminus of the alpha chain.

It catalyses the reaction S-adenosyl-L-methionine + H(+) = S-adenosyl 3-(methylsulfanyl)propylamine + CO2. It participates in amine and polyamine biosynthesis; S-adenosylmethioninamine biosynthesis; S-adenosylmethioninamine from S-adenosyl-L-methionine: step 1/1. The protein is S-adenosylmethionine decarboxylase proenzyme 3 (SAMDC3) of Brassica juncea (Indian mustard).